The sequence spans 296 residues: uncharacterized protein (296 aa).

Positions 1-20 (MKKALGILAILLILVGGYFA) are cleaved as a signal peptide.

This is an uncharacterized protein from Aquifex aeolicus (strain VF5).